Here is a 401-residue protein sequence, read N- to C-terminus: Exodeoxyribonuclease 7 large subunit (401 aa).

It belongs to the XseA family. As to quaternary structure, heterooligomer composed of large and small subunits.

The protein localises to the cytoplasm. The catalysed reaction is Exonucleolytic cleavage in either 5'- to 3'- or 3'- to 5'-direction to yield nucleoside 5'-phosphates.. Functionally, bidirectionally degrades single-stranded DNA into large acid-insoluble oligonucleotides, which are then degraded further into small acid-soluble oligonucleotides. This chain is Exodeoxyribonuclease 7 large subunit, found in Syntrophotalea carbinolica (strain DSM 2380 / NBRC 103641 / GraBd1) (Pelobacter carbinolicus).